The following is a 788-amino-acid chain: Integrin beta-3 (788 aa).

The N-terminal stretch at Met-1–Gly-26 is a signal peptide. Over Gly-27–Asp-718 the chain is Extracellular. In terms of domain architecture, PSI spans Ile-30–Ala-76. 19 disulfide bridges follow: Cys-31–Cys-49, Cys-39–Cys-461, Cys-42–Cys-64, Cys-52–Cys-75, Cys-203–Cys-210, Cys-258–Cys-299, Cys-400–Cys-412, Cys-432–Cys-459, Cys-463–Cys-483, Cys-474–Cys-486, Cys-488–Cys-497, Cys-499–Cys-529, Cys-512–Cys-527, Cys-521–Cys-532, Cys-534–Cys-547, Cys-549–Cys-570, Cys-554–Cys-568, Cys-562–Cys-573, and Cys-575–Cys-584. Residue Asn-125 is glycosylated (N-linked (GlcNAc...) asparagine). In terms of domain architecture, VWFA spans Asp-135–Ile-377. Mg(2+) is bound by residues Ser-147 and Ser-149. Ca(2+) contacts are provided by Ser-149, Asp-152, Asp-153, and Asp-184. Residues Cys-203–Cys-210 form an involved in CX3CL1-, NRG1-, FGF1- and IGF1-binding region. Residues Asn-241, Asp-243, Pro-245, Glu-246, and Asp-277 each contribute to the Ca(2+) site. Residue Glu-246 coordinates Mg(2+). The segment at Gln-293–Met-313 is CX3CL1-binding. N-linked (GlcNAc...) asparagine glycosylation is present at Asn-346. Residue Met-361 participates in Ca(2+) binding. Residue Asn-397 is glycosylated (N-linked (GlcNAc...) asparagine). I-EGF domains lie at Cys-463–Glu-498, Cys-499–Glu-548, Cys-549–Asn-585, and Cys-586–Glu-625. N-linked (GlcNAc...) asparagine glycosylation is present at Asn-478. N-linked (GlcNAc...) asparagine glycosylation is present at Asn-585. Cystine bridges form between Cys-586–Cys-609, Cys-593–Cys-607, Cys-601–Cys-612, Cys-614–Cys-624, Cys-627–Cys-630, Cys-634–Cys-681, Cys-640–Cys-661, Cys-643–Cys-657, and Cys-689–Cys-713. N-linked (GlcNAc...) asparagine glycosylation occurs at Asn-680. The helical transmembrane segment at Ile-719–Trp-741 threads the bilayer. Residues Lys-742–Thr-788 lie on the Cytoplasmic side of the membrane. Thr-767 carries the post-translational modification Phosphothreonine. A Phosphotyrosine modification is found at Tyr-773. The LIR signature appears at Thr-777–Ile-783. Thr-779 is subject to Phosphothreonine; by PDPK1 and PKB/AKT1; in vitro. At Tyr-785 the chain carries Phosphotyrosine.

This sequence belongs to the integrin beta chain family. Heterodimer of an alpha and a beta subunit. Beta-3 (ITGB3) associates with either alpha-IIb (ITGA2B) or alpha-V (ITGAV). Isoform Beta-3C interacts with FLNB. Interacts with COMP. Interacts with PDIA6 following platelet stimulation. Interacts with SYK; upon activation by ITGB3 promotes platelet adhesion. Interacts with MYO10. Interacts with DAB2. Interacts with FERMT2. Interacts with EMP2; regulates the levels of the heterodimer ITGA5:ITGB3 integrin expression on the plasma membrane. Integrin ITGAV:ITGB3 interacts with FBLN5 (via N-terminus). ITGAV:ITGB3 interacts with CCN3. ITGAV:ITGB3 and ITGA2B:ITGB3 interact with SELP (via C-type lectin domain); the interaction mediates cell-cell interaction and adhesion. ITGAV:ITGB3 is found in a ternary complex with CX3CR1 and CX3CL1. ITGAV:ITGB3 is found in a ternary complex with NRG1 and ERBB3. ITGAV:ITGB3 is found in a ternary complex with FGF1 and FGFR1. ITGAV:ITGB3 interacts with FGF2; it is likely that FGF2 can simultaneously bind ITGAV:ITGB3 and FGF receptors. ITGAV:ITGB3 binds to IL1B. ITGAV:ITGB3 is found in a ternary complex with IGF1 and IGF1R. ITGAV:ITGB3 interacts with IGF2. ITGAV:ITGB3 interacts with FBN1. ITGAV:ITGB3 interacts with CD9, CD81 and CD151 (via second extracellular domain). Interacts (via the allosteric site (site 2)) with CXCL12 in a CXCR4-independent manner. Interacts with MXRA8/DICAM; the interaction inhibits ITGAV:ITGB3 heterodimer formation. ITGAV:ITGB3 interacts with PTN. Forms a complex with PTPRZ1 and PTN that stimulates endothelial cell migration through ITGB3 Tyr-773 phosphorylation. ITGAV:ITGB3 interacts with SLC6A4. Interacts with SLC6A4 (via C-terminus); this interaction regulates SLC6A4 trafficking. ITGA2B:ITGB3 interacts with PPIA/CYPA; the interaction is ROS and PPIase activity-dependent and is increased in the presence of thrombin. Interacts with tensin TNS3; TNS3 also interacts with PEAK1, thus acting as an adapter molecule to bridge the association of PEAK1 with ITGB3. Interacts with TM4SF19. In terms of assembly, (Microbial infection) Integrin ITGAV:ITGB3 interacts with herpes virus 8/HHV-8 glycoprotein B. As to quaternary structure, (Microbial infection) Integrin ITGAV:ITGB3 interacts with coxsackievirus A9 capsid proteins. (Microbial infection) Interacts with Hantaan virus glycoprotein G. In terms of assembly, (Microbial infection) Integrin ITGAV:ITGB3 interacts with cytomegalovirus/HHV-5 gH:gL proteins. As to quaternary structure, (Microbial infection) Integrin ITGA5:ITGB3 interacts with human metapneumovirus fusion protein. (Microbial infection) Integrin ITGAV:ITGB3 interacts with human parechovirus 1 capsid proteins. In terms of assembly, (Microbial infection) Integrin ITGAV:ITGB3 interacts with west nile virus envelope protein E. As to quaternary structure, (Microbial infection) Interacts with HIV-1 Tat. ITGAV:ITGB3 interacts with AGRA2. In terms of processing, phosphorylated on tyrosine residues in response to thrombin-induced platelet aggregation. Probably involved in outside-in signaling. A peptide (AA 740-762) is capable of binding GRB2 only when both Tyr-773 and Tyr-785 are phosphorylated. Phosphorylation of Thr-779 inhibits SHC binding. Isoform beta-3A and isoform beta-3C are widely expressed. Isoform beta-3A is specifically expressed in osteoblast cells; isoform beta-3C is specifically expressed in prostate and testis.

The protein resides in the cell membrane. The protein localises to the cell projection. It localises to the lamellipodium membrane. It is found in the cell junction. Its subcellular location is the focal adhesion. The protein resides in the postsynaptic cell membrane. The protein localises to the synapse. Integrin alpha-V/beta-3 (ITGAV:ITGB3) is a receptor for cytotactin, fibronectin, laminin, matrix metalloproteinase-2, osteopontin, osteomodulin, prothrombin, thrombospondin, vitronectin and von Willebrand factor. Integrin alpha-IIb/beta-3 (ITGA2B:ITGB3) is a receptor for fibronectin, fibrinogen, plasminogen, prothrombin, thrombospondin and vitronectin. Integrins alpha-IIb/beta-3 and alpha-V/beta-3 recognize the sequence R-G-D in a wide array of ligands. Integrin alpha-IIb/beta-3 recognizes the sequence H-H-L-G-G-G-A-K-Q-A-G-D-V in fibrinogen gamma chain. Following activation integrin alpha-IIb/beta-3 brings about platelet/platelet interaction through binding of soluble fibrinogen. This step leads to rapid platelet aggregation which physically plugs ruptured endothelial surface. Fibrinogen binding enhances SELP expression in activated platelets. ITGAV:ITGB3 binds to fractalkine (CX3CL1) and acts as its coreceptor in CX3CR1-dependent fractalkine signaling. ITGAV:ITGB3 binds to NRG1 (via EGF domain) and this binding is essential for NRG1-ERBB signaling. ITGAV:ITGB3 binds to FGF1 and this binding is essential for FGF1 signaling. ITGAV:ITGB3 binds to FGF2 and this binding is essential for FGF2 signaling. ITGAV:ITGB3 binds to IGF1 and this binding is essential for IGF1 signaling. ITGAV:ITGB3 binds to IGF2 and this binding is essential for IGF2 signaling. ITGAV:ITGB3 binds to IL1B and this binding is essential for IL1B signaling. ITGAV:ITGB3 binds to PLA2G2A via a site (site 2) which is distinct from the classical ligand-binding site (site 1) and this induces integrin conformational changes and enhanced ligand binding to site 1. ITGAV:ITGB3 acts as a receptor for fibrillin-1 (FBN1) and mediates R-G-D-dependent cell adhesion to FBN1. In brain, plays a role in synaptic transmission and plasticity. Involved in the regulation of the serotonin neurotransmission, is required to localize to specific compartments within the synapse the serotonin receptor SLC6A4 and for an appropriate reuptake of serotonin. Controls excitatory synaptic strength by regulating GRIA2-containing AMPAR endocytosis, which affects AMPAR abundance and composition. ITGAV:ITGB3 act as a receptor for CD40LG. ITGAV:ITGB3 acts as a receptor for IBSP and promotes cell adhesion and migration to IBSP. In terms of biological role, (Microbial infection) Integrin ITGAV:ITGB3 acts as a receptor for Herpes virus 8/HHV-8. Its function is as follows. (Microbial infection) Integrin ITGAV:ITGB3 acts as a receptor for Coxsackievirus A9. Functionally, (Microbial infection) Acts as a receptor for Hantaan virus. (Microbial infection) Integrin ITGAV:ITGB3 acts as a receptor for Cytomegalovirus/HHV-5. In terms of biological role, (Microbial infection) Integrin ITGA5:ITGB3 acts as a receptor for Human metapneumovirus. Its function is as follows. (Microbial infection) Integrin ITGAV:ITGB3 acts aP05556s a receptor for Human parechovirus 1. Functionally, (Microbial infection) Integrin ITGAV:ITGB3 acts as a receptor for West nile virus. (Microbial infection) In case of HIV-1 infection, the interaction with extracellular viral Tat protein seems to enhance angiogenesis in Kaposi's sarcoma lesions. This Homo sapiens (Human) protein is Integrin beta-3.